The following is a 581-amino-acid chain: Serine/threonine-protein kinase SSN3 (581 aa).

The segment at 34 to 57 (LWSQQQQQQLLDTKGSASTSKSPM) is disordered. Residues 48-57 (GSASTSKSPM) show a composition bias toward polar residues. The Protein kinase domain maps to 85–475 (YEIIGYIAAG…AIDALEHEYF (391 aa)). ATP contacts are provided by residues 91–99 (IAAGTYGKV) and lysine 195. The Proton acceptor role is filled by aspartate 298.

Belongs to the protein kinase superfamily. CMGC Ser/Thr protein kinase family. CDC2/CDKX subfamily. In terms of assembly, component of the SRB8-11 complex, a regulatory module of the Mediator complex. Requires Mg(2+) as cofactor.

The protein localises to the nucleus. The catalysed reaction is L-seryl-[protein] + ATP = O-phospho-L-seryl-[protein] + ADP + H(+). It carries out the reaction L-threonyl-[protein] + ATP = O-phospho-L-threonyl-[protein] + ADP + H(+). The enzyme catalyses [DNA-directed RNA polymerase] + ATP = phospho-[DNA-directed RNA polymerase] + ADP + H(+). Its function is as follows. Component of the SRB8-11 complex. The SRB8-11 complex is a regulatory module of the Mediator complex which is itself involved in regulation of basal and activated RNA polymerase II-dependent transcription. The SRB8-11 complex may be involved in the transcriptional repression of a subset of genes regulated by Mediator. It may inhibit the association of the Mediator complex with RNA polymerase II to form the holoenzyme complex. The SRB8-11 complex phosphorylates the C-terminal domain (CTD) of the largest subunit of RNA polymerase II. The polypeptide is Serine/threonine-protein kinase SSN3 (SSN3) (Eremothecium gossypii (strain ATCC 10895 / CBS 109.51 / FGSC 9923 / NRRL Y-1056) (Yeast)).